A 177-amino-acid chain; its full sequence is Anti-apoptotic protein NR13 (177 aa).

Residues 75–94 (LETDGGLNWGRLLALVVFAG) carry the BH1 motif. A helical transmembrane segment spans residues 86–106 (LLALVVFAGTLAAALAESACE). Positions 126–141 (EWMEEHGGWDGFCRFF) match the BH2 motif. The helical transmembrane segment at 156 to 176 (SNAIMAAAGFGIAGLAFLLVV) threads the bilayer.

It belongs to the Bcl-2 family. Interacts with BAX. In terms of tissue distribution, mainly expressed in neural and muscular tissues.

It localises to the cell membrane. Its function is as follows. Shows anti-apoptotic properties. Counteract the pro-apoptotic activity of BAX. The chain is Anti-apoptotic protein NR13 (NR13) from Coturnix japonica (Japanese quail).